Consider the following 273-residue polypeptide: MTKLVIHLVSDSSVQTAKYAANSAIAQFTSVKPKLYHWPMIRNLELLNEVLSKIEYKRGIVLYTIADQELRKALTKFCYELKIPCISVIGKIIKEMSVFSGIEIEKEQNYNYKFDKTYFDTLNAIDYAIRHDDGQMLNELSEADIILIGPSRTSKTPTSVFLAYNGLKAANIPYVYNCPFPDFIEKDIDQLVVGLVINPNRLIEIREARLNLLQINENKSYTDFNIVQKECLEVRKICDQRNWPVIDVSTRSIEETAALIMRIYYNKKNKYNK.

149–156 (GPSRTSKT) lines the ADP pocket.

It belongs to the pyruvate, phosphate/water dikinase regulatory protein family. PDRP subfamily.

The enzyme catalyses N(tele)-phospho-L-histidyl/L-threonyl-[pyruvate, phosphate dikinase] + ADP = N(tele)-phospho-L-histidyl/O-phospho-L-threonyl-[pyruvate, phosphate dikinase] + AMP + H(+). It catalyses the reaction N(tele)-phospho-L-histidyl/O-phospho-L-threonyl-[pyruvate, phosphate dikinase] + phosphate + H(+) = N(tele)-phospho-L-histidyl/L-threonyl-[pyruvate, phosphate dikinase] + diphosphate. Bifunctional serine/threonine kinase and phosphorylase involved in the regulation of the pyruvate, phosphate dikinase (PPDK) by catalyzing its phosphorylation/dephosphorylation. This Rickettsia massiliae (strain Mtu5) protein is Putative pyruvate, phosphate dikinase regulatory protein.